The following is a 159-amino-acid chain: Urease accessory protein UreE (159 aa).

The protein belongs to the UreE family.

The protein resides in the cytoplasm. In terms of biological role, involved in urease metallocenter assembly. Binds nickel. Probably functions as a nickel donor during metallocenter assembly. In Vibrio parahaemolyticus, this protein is Urease accessory protein UreE.